Consider the following 372-residue polypeptide: Lysophosphatidic acid receptor 5 (372 aa).

Residues 1 to 26 are Extracellular-facing; that stretch reads MLANSSSTNSSVLPCPDYRPTHRLHL. N-linked (GlcNAc...) asparagine glycosylation is found at Asn4 and Asn9. The chain crosses the membrane as a helical span at residues 27–47; sequence VVYSLVLAAGLPLNALALWVF. The Cytoplasmic portion of the chain corresponds to 48–55; it reads LRALRVHS. The helical transmembrane segment at 56-76 threads the bilayer; it reads VVSVYMCNLAASDLLFTLSLP. Residues 77 to 96 lie on the Extracellular side of the membrane; the sequence is VRLSYYALHHWPFPDLLCQT. An intrachain disulfide couples Cys94 to Cys175. Residues 97-117 form a helical membrane-spanning segment; that stretch reads TGAIFQMNMYGSCIFLMLINV. The Cytoplasmic portion of the chain corresponds to 118 to 136; it reads DRYAAIVHPLRLRHLRRPR. A helical membrane pass occupies residues 137–157; sequence VARLLCLGVWALILVFAVPAA. Over 158–187 the chain is Extracellular; it reads RVHRPSRCRYRDLEVRLCFESFSDELWKGR. A helical transmembrane segment spans residues 188-208; it reads LLPLVLLAEALGFLLPLAAVV. Residues 209–239 are Cytoplasmic-facing; it reads YSSGRVFWTLARPDATQSQRRRKTVRLLLAN. A helical membrane pass occupies residues 240-260; it reads LVIFLLCFVPYNSTLAVYGLL. The Extracellular portion of the chain corresponds to 261–276; that stretch reads RSKLVAASVPARDRVR. A helical membrane pass occupies residues 277 to 297; it reads GVLMVMVLLAGANCVLDPLVY. At 298-372 the chain is on the cytoplasmic side; sequence YFSAEGFRNT…FTQCPQDSAL (75 aa). Residues 312 to 372 are disordered; it reads GTPHRARTSA…FTQCPQDSAL (61 aa). Composition is skewed to polar residues over residues 332–341 and 357–372; these read SERSAVTTDA and SHSL…DSAL.

This sequence belongs to the G-protein coupled receptor 1 family. Not expressed in frontal cortex, basal forebrain, caudate putamen, thalamus, or hippocampus.

Its subcellular location is the cell membrane. Functionally, receptor for lysophosphatidic acid (LPA), a mediator of diverse cellular activities. The sequence is that of Lysophosphatidic acid receptor 5 (LPAR5) from Homo sapiens (Human).